The following is a 206-amino-acid chain: 3-demethoxyubiquinol 3-hydroxylase (206 aa).

6 residues coordinate Fe cation: Glu-55, Glu-85, His-88, Glu-137, Glu-169, and His-172.

The protein belongs to the COQ7 family. Requires Fe cation as cofactor.

Its subcellular location is the cell membrane. The enzyme catalyses a 5-methoxy-2-methyl-3-(all-trans-polyprenyl)benzene-1,4-diol + AH2 + O2 = a 3-demethylubiquinol + A + H2O. It participates in cofactor biosynthesis; ubiquinone biosynthesis. In terms of biological role, catalyzes the hydroxylation of 2-nonaprenyl-3-methyl-6-methoxy-1,4-benzoquinol during ubiquinone biosynthesis. This is 3-demethoxyubiquinol 3-hydroxylase from Aromatoleum aromaticum (strain DSM 19018 / LMG 30748 / EbN1) (Azoarcus sp. (strain EbN1)).